A 330-amino-acid polypeptide reads, in one-letter code: Olfactory receptor 5P73 (330 aa).

Topologically, residues 1–28 (MAFLEDGNHTTVTEFFLLGLTDDPVLRD) are extracellular. N-linked (GlcNAc...) asparagine glycosylation occurs at asparagine 8. Residues 29 to 49 (ILFIIILCIYLVTVSGNLSTI) form a helical membrane-spanning segment. Over 50–57 (LLIRVSSQ) the chain is Cytoplasmic. A helical transmembrane segment spans residues 58 to 78 (LHHPMYFILSHLASVDIGISS). Over 79–102 (SVTPNMLATFLVKQNTISYIGCSI) the chain is Extracellular. A disulfide bridge connects residues cysteine 100 and cysteine 192. A helical membrane pass occupies residues 103–123 (QFTSAAFFGTVECFLLATMAY). Residues 124–136 (DRFVAICNPLLYS) lie on the Cytoplasmic side of the membrane. The chain crosses the membrane as a helical span at residues 137–157 (TKMSTEACIQLVVGSYIQGFL). Residues 158 to 199 (NASFFTLSFFSLFFCGPNRINDFYCDFAPLLELSCSDVTVAV) lie on the Extracellular side of the membrane. A helical membrane pass occupies residues 200–220 (VITSISAGFITLTTVFVIAIS). Residues 221-240 (YSCIFITIMKMHSTESRCKA) are Cytoplasmic-facing. A helical transmembrane segment spans residues 241–261 (FSTCTSHLTAVILFYGTAIFI). The Extracellular segment spans residues 262–274 (YVMPKSSYSTDQN). The helical transmembrane segment at 275-295 (KVLSIFYTVVIPMLNPLIYSL) threads the bilayer. Residues 296–330 (RNNEIKEALKRHLGKKVFSYGNLFCKTHYNHNYPV) lie on the Cytoplasmic side of the membrane.

Belongs to the G-protein coupled receptor 1 family.

It localises to the cell membrane. Its function is as follows. Potential odorant receptor. The sequence is that of Olfactory receptor 5P73 from Mus musculus (Mouse).